The sequence spans 563 residues: Sperm-tail PG-rich repeat-containing protein 2 (563 aa).

3 STPGR repeats span residues 21–34, 63–73, and 97–107; these read VGPG…PKQQ, PGPAHYNVSQA, and GPGPASYDCPY. Residues 131–163 form a disordered region; sequence IPSIPSSGKSHGYHLNEDDTIMRRTPPSSDKTM. STPGR repeat units lie at residues 200 to 219, 250 to 263, 292 to 321, 334 to 353, 423 to 438, 473 to 483, and 507 to 518; these read GPGP…YENI, PGPG…QFDH, TPAP…FGQR, LPGP…QVKK, LPAP…YDMS, GPGPATYNPIL, and SPGPTTYELSPF.

The protein is Sperm-tail PG-rich repeat-containing protein 2 (Stpg2) of Rattus norvegicus (Rat).